The chain runs to 426 residues: Serine hydroxymethyltransferase (426 aa).

(6S)-5,6,7,8-tetrahydrofolate-binding positions include leucine 118 and 122–124; that span reads GHL. N6-(pyridoxal phosphate)lysine is present on lysine 227. The tract at residues 342-368 is disordered; sequence NTIPNDPKPPTQASGIRLGTPAMTTRG.

The protein belongs to the SHMT family. As to quaternary structure, homodimer. Requires pyridoxal 5'-phosphate as cofactor.

It localises to the cytoplasm. The catalysed reaction is (6R)-5,10-methylene-5,6,7,8-tetrahydrofolate + glycine + H2O = (6S)-5,6,7,8-tetrahydrofolate + L-serine. It functions in the pathway one-carbon metabolism; tetrahydrofolate interconversion. It participates in amino-acid biosynthesis; glycine biosynthesis; glycine from L-serine: step 1/1. Its function is as follows. Catalyzes the reversible interconversion of serine and glycine with tetrahydrofolate (THF) serving as the one-carbon carrier. This reaction serves as the major source of one-carbon groups required for the biosynthesis of purines, thymidylate, methionine, and other important biomolecules. Also exhibits THF-independent aldolase activity toward beta-hydroxyamino acids, producing glycine and aldehydes, via a retro-aldol mechanism. This chain is Serine hydroxymethyltransferase, found in Thermomicrobium roseum (strain ATCC 27502 / DSM 5159 / P-2).